The following is a 759-amino-acid chain: LON peptidase N-terminal domain and RING finger protein 3 (759 aa).

The disordered stretch occupies residues 1–69; that stretch reads MESVRIEQML…PGTSTPESKV (69 aa). A compositionally biased stretch (polar residues) spans 57–66; the sequence is EQSPGTSTPE. Residues 67 to 100 form a TPR 1 repeat; it reads SKVLLTQADALASRGRIREALEVYRQLSERQQLV. An RING-type 1 zinc finger spans residues 158-196; it reads CRKCHGFLSDPVSLSCGHTFCKLCLERGRAADRRCALCG. 3 TPR repeats span residues 243–276, 278–310, and 312–344; these read ASQL…APND, LLYS…RPMG, and KAHF…DGKN. The segment at 360–454 is disordered; it reads HCSSQEEAAA…TDQGDKPALS (95 aa). Residues 380–393 show a composition bias toward basic and acidic residues; sequence AKVKGDGQQHHMKD. The segment at 467-505 adopts an RING-type 2 zinc-finger fold; it reads CALCMRLFYEPVTTPCGHTFCLKCLERCLDHNAKCPLCK. Residues 546-755 enclose the Lon N-terminal domain; the sequence is MEELSNLNKN…GIRRVLAFIS (210 aa).

This is LON peptidase N-terminal domain and RING finger protein 3 (LONRF3) from Homo sapiens (Human).